The sequence spans 358 residues: MTKIAFTGGGTVGHVSVNLSLIPTAIEEGYDTFYIGSKNGIEREMIESQLPSIKYHSISSGKLRRYISWDNIKDIFKVLKGVLDARSVLKKEKPDLLFSKGGFVSVPVVIAAKSLKIPTIIHESDLTPGLANKISLKFAKKIYTTFEDTLNYLPKDKADFVGATVREDLKTGDKHRGYQLTEFNNDKKVLLVMGGSLGSKKLNDIIRQNLETLQETYQVIHLTGKGLLDNSYVGTKDYIQFEFVKDDLTDLLAITDTVISRAGSNAIYEFLALRIPMLLIPLGLDQSRGDQIDNAKHFESKGFGKTILEDTLTENELKTQLREIETNRDDIIKQMQTYKESFTRQDLFQKIINDALSE.

UDP-N-acetyl-alpha-D-glucosamine contacts are provided by Arg-166, Ser-196, and Gln-291.

This sequence belongs to the glycosyltransferase 28 family. MurG subfamily.

It is found in the cell membrane. It catalyses the reaction Mur2Ac(oyl-L-Ala-gamma-D-Glu-L-Lys-D-Ala-D-Ala)-di-trans,octa-cis-undecaprenyl diphosphate + UDP-N-acetyl-alpha-D-glucosamine = beta-D-GlcNAc-(1-&gt;4)-Mur2Ac(oyl-L-Ala-gamma-D-Glu-L-Lys-D-Ala-D-Ala)-di-trans,octa-cis-undecaprenyl diphosphate + UDP + H(+). Its pathway is cell wall biogenesis; peptidoglycan biosynthesis. Functionally, cell wall formation. Catalyzes the transfer of a GlcNAc subunit on undecaprenyl-pyrophosphoryl-MurNAc-pentapeptide (lipid intermediate I) to form undecaprenyl-pyrophosphoryl-MurNAc-(pentapeptide)GlcNAc (lipid intermediate II). This Staphylococcus saprophyticus subsp. saprophyticus (strain ATCC 15305 / DSM 20229 / NCIMB 8711 / NCTC 7292 / S-41) protein is UDP-N-acetylglucosamine--N-acetylmuramyl-(pentapeptide) pyrophosphoryl-undecaprenol N-acetylglucosamine transferase.